The sequence spans 284 residues: Trimeric intracellular cation channel type B (284 aa).

Over 1–15 the chain is Lumenal; that stretch reads MESFSELSLQFSQLS. A helical transmembrane segment spans residues 16-32; it reads MFPFFETAHYLTSVMSA. Residues 33-44 are Cytoplasmic-facing; that stretch reads REQAGAVDVASR. Residues 45–68 traverse the membrane as a helical segment; the sequence is SPLASWFSSMLYCFGGGILSSILL. The Lumenal portion of the chain corresponds to 69 to 79; that stretch reads AEPPVGILSNT. Residues 80-99 form a helical membrane-spanning segment; that stretch reads TSIILASAVWYMVYYFPYDL. Residues 100 to 102 lie on the Cytoplasmic side of the membrane; sequence FYN. The helical transmembrane segment at 103–121 threads the bilayer; the sequence is CFFFLPIRLILAGMKEVTR. Residues lysine 117 and arginine 121 each coordinate a 1,2-diacyl-sn-glycero-3-phospho-(1D-myo-inositol-4,5-bisphosphate). Residues 122–139 are Lumenal-facing; that stretch reads TWKILSGVAHAHSHYKDA. A helical membrane pass occupies residues 140–157; the sequence is MLVMITIGWARGAGGGLI. Residues 158 to 178 are Cytoplasmic-facing; that stretch reads SNFEQLVRGVWKPESNEFLKM. Residues 179-196 traverse the membrane as a helical segment; sequence SYPVKVTLIGAVLFTLQH. Over 197 to 204 the chain is Lumenal; the sequence is GQYLPISR. A helical membrane pass occupies residues 205–225; it reads HNLMFIYTLFLILIKVTMMLT. At 226–284 the chain is on the cytoplasmic side; the sequence is RSTASPFLPLETSLQHILFSRQQIPAEVRESPSSSGDKGKPSKKTLDKDSGEQDNKKDN. A disordered region spans residues 250–284; it reads PAEVRESPSSSGDKGKPSKKTLDKDSGEQDNKKDN. Positions 262-284 are enriched in basic and acidic residues; the sequence is DKGKPSKKTLDKDSGEQDNKKDN.

Belongs to the TMEM38 family. Homotrimer; conformation seems to be controled by binding to diacylglycerol (DAG).

The protein resides in the endoplasmic reticulum membrane. The catalysed reaction is K(+)(in) = K(+)(out). With respect to regulation, channel activity is activated by increased cytosolic Ca(2+) levels and blocked by luminal high Ca(2+) levels. Functionally, intracellular monovalent cation channel required for maintenance of rapid intracellular calcium release. Acts as a potassium counter-ion channel that functions in synchronization with calcium release from intracellular stores. Activated by increased cytosolic Ca(2+) levels. In Xenopus tropicalis (Western clawed frog), this protein is Trimeric intracellular cation channel type B (tmem38b).